A 399-amino-acid polypeptide reads, in one-letter code: Dual-specificity RNA methyltransferase RlmN (399 aa).

The Proton acceptor role is filled by Glu122. Residues 128 to 371 enclose the Radical SAM core domain; it reads ETDRGTLCVS…VRTPRGRDIL (244 aa). Residues Cys135 and Cys374 are joined by a disulfide bond. Residues Cys142, Cys146, and Cys149 each coordinate [4Fe-4S] cluster. Residues 200–201, Ser232, 254–256, and Asn331 contribute to the S-adenosyl-L-methionine site; these read GE and SLH. The active-site S-methylcysteine intermediate is Cys374.

It belongs to the radical SAM superfamily. RlmN family. The cofactor is [4Fe-4S] cluster.

It localises to the cytoplasm. It carries out the reaction adenosine(2503) in 23S rRNA + 2 reduced [2Fe-2S]-[ferredoxin] + 2 S-adenosyl-L-methionine = 2-methyladenosine(2503) in 23S rRNA + 5'-deoxyadenosine + L-methionine + 2 oxidized [2Fe-2S]-[ferredoxin] + S-adenosyl-L-homocysteine. The catalysed reaction is adenosine(37) in tRNA + 2 reduced [2Fe-2S]-[ferredoxin] + 2 S-adenosyl-L-methionine = 2-methyladenosine(37) in tRNA + 5'-deoxyadenosine + L-methionine + 2 oxidized [2Fe-2S]-[ferredoxin] + S-adenosyl-L-homocysteine. Its function is as follows. Specifically methylates position 2 of adenine 2503 in 23S rRNA and position 2 of adenine 37 in tRNAs. m2A2503 modification seems to play a crucial role in the proofreading step occurring at the peptidyl transferase center and thus would serve to optimize ribosomal fidelity. The protein is Dual-specificity RNA methyltransferase RlmN of Rhodopseudomonas palustris (strain ATCC BAA-98 / CGA009).